Reading from the N-terminus, the 762-residue chain is Homeobox-leucine zipper protein MERISTEM L1 (762 aa).

The segment at 13-72 (MFDMTPKNSENDLGITGSHEEDFETKSGAEVTMENPLEEELQDPNQRPNKKKRYHRHTQR) is disordered. Over residues 30 to 39 (SHEEDFETKS) the composition is skewed to basic and acidic residues. Residues 60–71 (PNKKKRYHRHTQ) are compositionally biased toward basic residues. Residues 62–121 (KKKRYHRHTQRQIQELESFFKECPHPDDKQRKELSRELSLEPLQVKFWFQNKRTQMKAQH) constitute a DNA-binding region (homeobox). Residues 110–192 (FQNKRTQMKA…DRISAIAAKY (83 aa)) are a coiled coil. In terms of domain architecture, START spans 253–484 (SEADKPMIVE…LDRQCERLAS (232 aa)).

The protein belongs to the HD-ZIP homeobox family. Class IV subfamily. As to quaternary structure, interacts with GAI/RGA2, RGA/RGA1/GRS, RGL2/SCL19 and PDF2. Interacts with AIL7/PLT7, ANT, BBM and AIL1.

The protein localises to the nucleus. Functionally, probable transcription factor involved in cell specification and pattern formation during embryogenesis. Binds to the L1 box DNA sequence 5'-TAAATG[CT]A-3'. Plays a role in maintaining the identity of L1 cells, possibly by interacting with their L1 box or other target-gene promoters; binds to the LIP1 gene promoter and stimulates its expression upon imbibition. Acts as a positive regulator of gibberellins (GAs)-regulated epidermal gene expression (e.g. LIP1, LIP2, LTP1, FDH and PDF1). Functionally redundant to PDF2. Seems to promote cell differentiation. The sequence is that of Homeobox-leucine zipper protein MERISTEM L1 from Arabidopsis thaliana (Mouse-ear cress).